Here is a 3354-residue protein sequence, read N- to C-terminus: Cadherin-23 (3354 aa).

The N-terminal stretch at 1–23 (MRYSLVTCYAVLWLLMLVPGSWG) is a signal peptide. Residues 24-3064 (QVNRLPFFTN…SVQLPDDMSA (3041 aa)) lie on the Extracellular side of the membrane. Cadherin domains follow at residues 34-132 (HFFD…APTF), 133-236 (HNQP…DPIF), 237-348 (INLP…APEF), 349-460 (NSSE…RPIF), 461-561 (SQPL…VPTF), 562-671 (QKDA…PPTF), 672-784 (SKPA…APYY), 779-890 (KDAP…DPTF), 891-995 (RNLP…TPTF), 996-1102 (FPAV…RPIF), 1103-1208 (LQSS…APVF), 1210-1313 (QQQY…AVQF), 1314-1418 (SNAS…SPRF), 1420-1527 (FTSD…PPVI), 1529-1634 (SPFG…APVF), 1635-1744 (QQPH…VPTF), 1745-1851 (PRDY…DPVL), 1852-1959 (LNLP…HPLF), 1960-2069 (TEGT…WPTF), 2070-2174 (SPPT…RPEF), 2175-2293 (LNPI…TPQF), 2297-2402 (GITY…NPIF), 2403-2509 (DQPS…RPQF), 2510-2611 (SKPQ…RPVF), 2614-2722 (PPNG…EPLF), 2729-2846 (SPQY…PPRF), and 2847-2975 (TKAE…EEEF). Residues N155 and N206 are each glycosylated (N-linked (GlcNAc...) asparagine). N349, N393, N434, N466, N472, N602, N694, N765, N810, N827, N941, N1001, N1018, N1171, N1282, N1315, N1473, N1534, N1651, N1667, N1818, N1857, N1889, N1902, N2014, N2050, N2129, N2168, N2195, N2263, N2357, and N2369 each carry an N-linked (GlcNAc...) asparagine glycan. N2578, N2616, N2749, N2808, N2877, N2896, N2941, and N2981 each carry an N-linked (GlcNAc...) asparagine glycan. A helical membrane pass occupies residues 3065–3085 (LQMAIIVLAILLFLAAMLFVL). Residues 3086 to 3354 (MNWYYRTIHK…MESPLEITEL (269 aa)) lie on the Cytoplasmic side of the membrane.

As to quaternary structure, interacts with USH1C and USH1G. antiparallel heterodimer with PCDH15. Isoform C1: Interacts with CAMSAP3; leading to inhibit CAMSAP3 ability to induce microtubule bundle formation. In adult animals relatively high levels of expression are found in testis, skeletal muscle, heart, eye and thymus, and lower expression in kidney, lung and brain. Found in the sensory hair cells of the inner ear.

The protein resides in the cell membrane. Cadherins are calcium-dependent cell adhesion proteins. They preferentially interact with themselves in a homophilic manner in connecting cells. CDH23 is required for establishing and/or maintaining the proper organization of the stereocilia bundle of hair cells in the cochlea and the vestibule during late embryonic/early postnatal development. It is part of the functional network formed by USH1C, USH1G, CDH23 and MYO7A that mediates mechanotransduction in cochlear hair cells. Required for normal hearing. The polypeptide is Cadherin-23 (Cdh23) (Mus musculus (Mouse)).